A 365-amino-acid chain; its full sequence is Regulatory protein RapG (365 aa).

TPR repeat units follow at residues 135–168 (GKLY…KKKL), 169–202 (ASAL…TSEL), 209–242 (AQLL…DEYA), 244–284 (SAYY…EPNR), and 326–359 (RELS…EELI).

This sequence belongs to the Rap family.

The protein resides in the cytoplasm. Inhibited by PhrG. Involved in the regulation of expression of DegU-controlled genes. Inhibits the binding of DegU to the promoter regions of aprE, coding for an extracellular alkaline protease, and comK, a master regulator for development of genetic competence. RapG does not stimulate dephosphorylation of DegU-P. This is Regulatory protein RapG (rapG) from Bacillus subtilis (strain 168).